A 105-amino-acid polypeptide reads, in one-letter code: NADH-quinone oxidoreductase subunit K (105 aa).

3 consecutive transmembrane segments (helical) span residues 8–28 (LAAY…GVFL), 34–54 (IILL…LVAF), and 65–85 (VFVF…LAIL).

This sequence belongs to the complex I subunit 4L family. As to quaternary structure, NDH-1 is composed of 14 different subunits. Subunits NuoA, H, J, K, L, M, N constitute the membrane sector of the complex.

It is found in the cell inner membrane. It carries out the reaction a quinone + NADH + 5 H(+)(in) = a quinol + NAD(+) + 4 H(+)(out). Functionally, NDH-1 shuttles electrons from NADH, via FMN and iron-sulfur (Fe-S) centers, to quinones in the respiratory chain. The immediate electron acceptor for the enzyme in this species is believed to be ubiquinone. Couples the redox reaction to proton translocation (for every two electrons transferred, four hydrogen ions are translocated across the cytoplasmic membrane), and thus conserves the redox energy in a proton gradient. This is NADH-quinone oxidoreductase subunit K from Acidithiobacillus ferrooxidans (strain ATCC 23270 / DSM 14882 / CIP 104768 / NCIMB 8455) (Ferrobacillus ferrooxidans (strain ATCC 23270)).